We begin with the raw amino-acid sequence, 239 residues long: DNA damage-regulated autophagy modulator protein 1 (239 aa).

6 consecutive transmembrane segments (helical) span residues 15–35 (ILVIWSSAGFLFSYIISVLIG), 54–74 (SGVFGFMISVSAMLGAATMYT), 91–111 (IYFNKISLAIGLFGCIGMGIV), 119–139 (VPAVHDAGALITFICGVMYIL), 162–182 (MTVSLIAFIAVVPMSVFSILS), and 201–221 (TSAICEWTVAFGFNMYFLTFI).

It belongs to the DRAM/TMEM150 family.

The protein resides in the lysosome membrane. In terms of biological role, lysosomal modulator of autophagy that plays a central role in p53/TP53-mediated apoptosis. The sequence is that of DNA damage-regulated autophagy modulator protein 1 (dram1) from Xenopus laevis (African clawed frog).